A 279-amino-acid chain; its full sequence is Phosphate import ATP-binding protein PstB 2 (279 aa).

Residues 34–274 (FDIENLDLYY…PSDDRTRGYV (241 aa)) form the ABC transporter domain. 66 to 73 (GPSGCGKS) contributes to the ATP binding site.

This sequence belongs to the ABC transporter superfamily. Phosphate importer (TC 3.A.1.7) family. In terms of assembly, the complex is composed of two ATP-binding proteins (PstB), two transmembrane proteins (PstC and PstA) and a solute-binding protein (PstS).

The protein localises to the cell inner membrane. The catalysed reaction is phosphate(out) + ATP + H2O = ADP + 2 phosphate(in) + H(+). Its function is as follows. Part of the ABC transporter complex PstSACB involved in phosphate import. Responsible for energy coupling to the transport system. This Vibrio vulnificus (strain YJ016) protein is Phosphate import ATP-binding protein PstB 2.